A 234-amino-acid chain; its full sequence is Nitroreductase NfnB (234 aa).

Residue 25-29 (RRAVR) coordinates FMN. 4 residues coordinate NADP(+): serine 55, arginine 105, tyrosine 113, and isoleucine 118. FMN contacts are provided by residues tyrosine 137, 181–182 (AL), and arginine 223.

Belongs to the nitroreductase family. In terms of assembly, homodimer. FMN serves as cofactor.

Functionally, confers resistance to antitubercular drugs benzothiazinone (BTZ) and dinitrobenzamide (DNB). Inactivates BTZ and DNB by reducing an essential nitro group of these compounds to amino group or to hydroxyl amine, respectively, using NADH or NADPH as source of reducing equivalents; two electrons are transferred. Able to reduce the nitro group of bicyclic nitroimidazole PA-824, but not of quinone menadione, nitrofurazone, methyl-4-nitrobenzoate, 4-nitrobenzene methyl sulfonate or 4-nitroacetophenone. The polypeptide is Nitroreductase NfnB (Mycolicibacterium smegmatis (strain ATCC 700084 / mc(2)155) (Mycobacterium smegmatis)).